We begin with the raw amino-acid sequence, 99 residues long: Secreted RxLR effector protein 94 (99 aa).

Positions Arg35–Arg55 match the RxLR-dEER motif.

It belongs to the RxLR effector family.

It localises to the secreted. It is found in the host nucleus. The protein resides in the host cytoplasm. Functionally, secreted effector that completely suppresses the host cell death induced by cell death-inducing proteins. This Plasmopara viticola (Downy mildew of grapevine) protein is Secreted RxLR effector protein 94.